The following is a 325-amino-acid chain: Heat-inducible transcription repressor HrcA (325 aa).

The protein belongs to the HrcA family.

In terms of biological role, negative regulator of class I heat shock genes (grpE-dnaK-dnaJ and groELS operons). Prevents heat-shock induction of these operons. This Staphylococcus aureus (strain MRSA252) protein is Heat-inducible transcription repressor HrcA.